The chain runs to 370 residues: MADIQNISLDSPGSVGAVAVPVVFALIFLLGMVGNGLVLAVLLQPGPSAWQEPGSTTDLFILNLAVADLCFILCCVPFQAAIYTLDAWLFGAFVCKTVHLLIYLTMYASSFTLAAVSVDRYLAVRHPLRSRALRTPRNARAAVGLVWLLAALFSAPYLSYYGTVRYGALELCVPAWEDARRRALDVATFAAGYLLPVTVVSLAYGRTLCFLWAAVGPAGAAAAEARRRATGRAGRAMLTVAALYALCWGPHHALILCFWYGRFAFSPATYACRLASHCLAYANSCLNPLVYSLASRHFRARFRRLWPCGHRRHRHHHHRLHRALRRVQPASSGPAGYPGDARPRGWSMEPRGDALRGGETRLTLSARGPQ.

Residues methionine 1–valine 20 lie on the Extracellular side of the membrane. N-linked (GlcNAc...) asparagine glycosylation is present at asparagine 6. A helical membrane pass occupies residues proline 21 to valine 41. Residues leucine 42–threonine 57 lie on the Cytoplasmic side of the membrane. Residues aspartate 58–phenylalanine 78 traverse the membrane as a helical segment. The Extracellular portion of the chain corresponds to glutamine 79–lysine 96. A disulfide bridge links cysteine 95 with cysteine 172. Residues threonine 97–valine 118 form a helical membrane-spanning segment. Residues aspartate 119 to asparagine 138 lie on the Cytoplasmic side of the membrane. Residues alanine 139–serine 159 traverse the membrane as a helical segment. The Extracellular portion of the chain corresponds to tyrosine 160–leucine 184. The helical transmembrane segment at aspartate 185–glycine 205 threads the bilayer. The Cytoplasmic portion of the chain corresponds to arginine 206–alanine 236. Residues methionine 237–cysteine 257 form a helical membrane-spanning segment. At phenylalanine 258–tryptophan 259 the chain is on the extracellular side. A helical membrane pass occupies residues tyrosine 260–alanine 280. Residues tyrosine 281 to glutamine 370 are Cytoplasmic-facing. Cysteine 308 is lipidated: S-palmitoyl cysteine. Residues glutamine 328–glutamine 370 are disordered. The segment covering proline 350–glutamate 359 has biased composition (basic and acidic residues).

It belongs to the G-protein coupled receptor 1 family.

It is found in the cell membrane. Its function is as follows. Receptor for the hormone galanin and spexin-1. The polypeptide is Galanin receptor type 3 (Galr3) (Mus musculus (Mouse)).